Reading from the N-terminus, the 306-residue chain is Tryptophan 2,3-dioxygenase (306 aa).

A disordered region spans residues 1 to 29 (MQPPGDDAAPRCPFAGAHAPDAPHVPEAA). Substrate is bound by residues 75–79 (FIIQH), Y137, and R141. H264 serves as a coordination point for heme. T278 is a substrate binding site.

This sequence belongs to the tryptophan 2,3-dioxygenase family. In terms of assembly, homotetramer. It depends on heme as a cofactor.

The enzyme catalyses L-tryptophan + O2 = N-formyl-L-kynurenine. Its pathway is amino-acid degradation; L-tryptophan degradation via kynurenine pathway; L-kynurenine from L-tryptophan: step 1/2. In terms of biological role, heme-dependent dioxygenase that catalyzes the oxidative cleavage of the L-tryptophan (L-Trp) pyrrole ring and converts L-tryptophan to N-formyl-L-kynurenine. Catalyzes the oxidative cleavage of the indole moiety. The polypeptide is Tryptophan 2,3-dioxygenase (Burkholderia mallei (strain NCTC 10247)).